Consider the following 425-residue polypeptide: Gamma-glutamyl phosphate reductase (425 aa).

This sequence belongs to the gamma-glutamyl phosphate reductase family.

Its subcellular location is the cytoplasm. It carries out the reaction L-glutamate 5-semialdehyde + phosphate + NADP(+) = L-glutamyl 5-phosphate + NADPH + H(+). It functions in the pathway amino-acid biosynthesis; L-proline biosynthesis; L-glutamate 5-semialdehyde from L-glutamate: step 2/2. Catalyzes the NADPH-dependent reduction of L-glutamate 5-phosphate into L-glutamate 5-semialdehyde and phosphate. The product spontaneously undergoes cyclization to form 1-pyrroline-5-carboxylate. This Xylella fastidiosa (strain M23) protein is Gamma-glutamyl phosphate reductase.